Consider the following 62-residue polypeptide: Conotoxin Tx5.1 (62 aa).

A signal peptide spans 1–22 (MCCLPVFVILLLLIASAPSVDA). A propeptide spanning residues 23–49 (QPKTKDDVPLAPLHDNAKSALQHLNQR) is cleaved from the precursor. At Gln60 the chain carries Glutamine amide.

Belongs to the conotoxin T superfamily. Post-translationally, contains 2 disulfide bonds that can be either 'C1-C3, C2-C4' or 'C1-C4, C2-C3', since these disulfide connectivities have been observed for conotoxins with cysteine framework V (for examples, see AC P0DQQ7 and AC P81755). Expressed by the venom duct.

It localises to the secreted. In Conus textile (Cloth-of-gold cone), this protein is Conotoxin Tx5.1.